A 455-amino-acid polypeptide reads, in one-letter code: Ribulose bisphosphate carboxylase large chain (455 aa).

At Lys-5 the chain carries N6,N6,N6-trimethyllysine. Residues Asn-114 and Thr-164 each coordinate substrate. The Proton acceptor role is filled by Lys-166. Position 168 (Lys-168) interacts with substrate. Mg(2+)-binding residues include Lys-192, Asp-194, and Glu-195. An N6-carboxylysine modification is found at Lys-192. The Proton acceptor role is filled by His-285. Substrate-binding residues include Arg-286, His-318, and Ser-370.

Belongs to the RuBisCO large chain family. Type I subfamily. Heterohexadecamer of 8 large chains and 8 small chains; disulfide-linked. The disulfide link is formed within the large subunit homodimers. Mg(2+) is required as a cofactor. Post-translationally, the disulfide bond which can form in the large chain dimeric partners within the hexadecamer appears to be associated with oxidative stress and protein turnover.

Its subcellular location is the plastid. It is found in the chloroplast. The catalysed reaction is 2 (2R)-3-phosphoglycerate + 2 H(+) = D-ribulose 1,5-bisphosphate + CO2 + H2O. It catalyses the reaction D-ribulose 1,5-bisphosphate + O2 = 2-phosphoglycolate + (2R)-3-phosphoglycerate + 2 H(+). RuBisCO catalyzes two reactions: the carboxylation of D-ribulose 1,5-bisphosphate, the primary event in carbon dioxide fixation, as well as the oxidative fragmentation of the pentose substrate in the photorespiration process. Both reactions occur simultaneously and in competition at the same active site. In Lupinus nanus (Sky lupine), this protein is Ribulose bisphosphate carboxylase large chain.